A 299-amino-acid chain; its full sequence is Phosphoribosylaminoimidazole-succinocarboxamide synthase (299 aa).

The segment at 259 to 279 (PESGWDRKSEQPPPPLPQHVV) is disordered.

It belongs to the SAICAR synthetase family.

The catalysed reaction is 5-amino-1-(5-phospho-D-ribosyl)imidazole-4-carboxylate + L-aspartate + ATP = (2S)-2-[5-amino-1-(5-phospho-beta-D-ribosyl)imidazole-4-carboxamido]succinate + ADP + phosphate + 2 H(+). The protein operates within purine metabolism; IMP biosynthesis via de novo pathway; 5-amino-1-(5-phospho-D-ribosyl)imidazole-4-carboxamide from 5-amino-1-(5-phospho-D-ribosyl)imidazole-4-carboxylate: step 1/2. In Streptomyces avermitilis (strain ATCC 31267 / DSM 46492 / JCM 5070 / NBRC 14893 / NCIMB 12804 / NRRL 8165 / MA-4680), this protein is Phosphoribosylaminoimidazole-succinocarboxamide synthase.